Reading from the N-terminus, the 770-residue chain is NAD-dependent malic enzyme (770 aa).

Residues 1–440 are malic enzyme; it reads MNTGDKAKSQ…KLNRFVFRSG (440 aa). The active-site Proton acceptor is Lys107. A divalent metal cation contacts are provided by Glu149 and Asp150. NAD(+) is bound by residues Asp175 and Asn300. The segment at 441-770 is phosphate acetyltransferase; sequence FIMKPVFAAA…LAVVESSHPV (330 aa).

The protein in the N-terminal section; belongs to the malic enzymes family. This sequence in the C-terminal section; belongs to the phosphate acetyltransferase and butyryltransferase family. As to quaternary structure, homooctamer. The cofactor is Mg(2+). Mn(2+) is required as a cofactor.

The catalysed reaction is (S)-malate + NAD(+) = pyruvate + CO2 + NADH. Its activity is regulated as follows. Subject to substrate inhibition and shows allosteric regulation by acetyl-CoA. Its function is as follows. Required for symbiotic nitrogen fixation. Plays a key role in the conversion of malate to acetyl-CoA for efficient tricarboxylic acid cycle function in nitrogen-fixating bacteria. The polypeptide is NAD-dependent malic enzyme (dme) (Rhizobium meliloti (strain 1021) (Ensifer meliloti)).